Consider the following 123-residue polypeptide: Small ribosomal subunit protein uS12 (123 aa).

Asp89 carries the 3-methylthioaspartic acid modification.

It belongs to the universal ribosomal protein uS12 family. In terms of assembly, part of the 30S ribosomal subunit. Contacts proteins S8 and S17. May interact with IF1 in the 30S initiation complex.

With S4 and S5 plays an important role in translational accuracy. Functionally, interacts with and stabilizes bases of the 16S rRNA that are involved in tRNA selection in the A site and with the mRNA backbone. Located at the interface of the 30S and 50S subunits, it traverses the body of the 30S subunit contacting proteins on the other side and probably holding the rRNA structure together. The combined cluster of proteins S8, S12 and S17 appears to hold together the shoulder and platform of the 30S subunit. The chain is Small ribosomal subunit protein uS12 from Gluconobacter oxydans (strain 621H) (Gluconobacter suboxydans).